A 110-amino-acid polypeptide reads, in one-letter code: uncharacterized protein (110 aa).

This is an uncharacterized protein from Methanocaldococcus jannaschii (strain ATCC 43067 / DSM 2661 / JAL-1 / JCM 10045 / NBRC 100440) (Methanococcus jannaschii).